The chain runs to 285 residues: HTH-type transcriptional regulator MurR (285 aa).

The 77-residue stretch at 1-77 folds into the HTH rpiR-type domain; the sequence is MLYLTKISNA…MALIGEYSAS (77 aa). Residues 37–56 constitute a DNA-binding region (H-T-H motif); sequence SRQMAKQLGISQSSIVKFAQ. Residues 128–279 enclose the SIS domain; it reads IIEVISKAPF…SLKMIQRSSE (152 aa).

Homotetramer.

Its pathway is amino-sugar metabolism; N-acetylmuramate degradation [regulation]. In terms of biological role, represses the expression of the murPQ operon involved in the uptake and degradation of N-acetylmuramic acid (MurNAc). Binds to two adjacent inverted repeats within the operator region. MurNAc 6-phosphate, the substrate of MurQ, is the specific inducer that weakens binding of MurR to the operator. The protein is HTH-type transcriptional regulator MurR of Shigella boydii serotype 4 (strain Sb227).